The chain runs to 84 residues: Small ribosomal subunit protein uS17 (84 aa).

Belongs to the universal ribosomal protein uS17 family. Part of the 30S ribosomal subunit.

Its function is as follows. One of the primary rRNA binding proteins, it binds specifically to the 5'-end of 16S ribosomal RNA. The protein is Small ribosomal subunit protein uS17 of Photobacterium profundum (strain SS9).